The chain runs to 314 residues: Olfactory receptor 5F1 (314 aa).

Residues 1–25 (MTRKNYTSLTEFVLLGLADTLELQI) lie on the Extracellular side of the membrane. The N-linked (GlcNAc...) asparagine glycan is linked to N5. The helical transmembrane segment at 26–46 (ILFLFFLVIYTLTVLGNLGMI) threads the bilayer. At 47 to 54 (LLIRIDSQ) the chain is on the cytoplasmic side. The helical transmembrane segment at 55–75 (LHTPMYFFLANLSFVDVCNST) threads the bilayer. Over 76 to 99 (TITPKMLADLLSEKKTISFAGCFL) the chain is Extracellular. An intrachain disulfide couples C97 to C189. The chain crosses the membrane as a helical span at residues 100 to 120 (QMYFFISLATTECILFGLMAY). The Cytoplasmic portion of the chain corresponds to 121-139 (DRYAAICRPLLYSLIMSRT). The helical transmembrane segment at 140 to 160 (VYLKMAAGAFAAGLLNFMVNT) threads the bilayer. At 161 to 196 (SHVSSLSFCDSNVIHHFFCDSPPLFKLSCSDTILKE) the chain is on the extracellular side. The helical transmembrane segment at 197 to 217 (SISSILAGVNIVGTLLVILSS) threads the bilayer. At 218 to 237 (YSYVLFSIFSMHSGEGRHRA) the chain is on the cytoplasmic side. A helical membrane pass occupies residues 238–258 (FSTCASHLTAIILFYATCIYT). Residues 259–271 (YLRPSSSYSLNQD) lie on the Extracellular side of the membrane. The chain crosses the membrane as a helical span at residues 272 to 292 (KVASVFYTVVIPMLNPLIYSL). Residues 293-314 (RSKEVKKALANVISRKRTSSFL) lie on the Cytoplasmic side of the membrane.

This sequence belongs to the G-protein coupled receptor 1 family.

The protein resides in the cell membrane. In terms of biological role, odorant receptor. In Homo sapiens (Human), this protein is Olfactory receptor 5F1 (OR5F1).